The following is a 194-amino-acid chain: MSEIKLIVGLGNPGDKYADTRHNAGEWLIERLARRFNFNLSVESKFSGKTARAVISGQEMRFLVPTTFMNLSGKAVSALANFYRIPPEQILVLHDELDFSPGIAKIKQGGGHGGHNGLKDIIAQLANNKNFYRLRIGIGHPGDKNLVASYVLNKPSPTDRQLIDRSLEEATDCIEILMKEGITKATNRLNAFKA.

Tyr17 contributes to the tRNA binding site. Catalysis depends on His22, which acts as the Proton acceptor. 3 residues coordinate tRNA: Phe68, Asn70, and Asn116.

The protein belongs to the PTH family. As to quaternary structure, monomer.

It is found in the cytoplasm. It catalyses the reaction an N-acyl-L-alpha-aminoacyl-tRNA + H2O = an N-acyl-L-amino acid + a tRNA + H(+). Hydrolyzes ribosome-free peptidyl-tRNAs (with 1 or more amino acids incorporated), which drop off the ribosome during protein synthesis, or as a result of ribosome stalling. Functionally, catalyzes the release of premature peptidyl moieties from peptidyl-tRNA molecules trapped in stalled 50S ribosomal subunits, and thus maintains levels of free tRNAs and 50S ribosomes. The sequence is that of Peptidyl-tRNA hydrolase from Histophilus somni (strain 129Pt) (Haemophilus somnus).